The following is a 257-amino-acid chain: Probable amino-acid ABC transporter ATP-binding protein y4tH (257 aa).

The ABC transporter domain maps to I6–L251. Position 38–45 (G38–S45) interacts with ATP.

This sequence belongs to the ABC transporter superfamily.

The protein resides in the cell inner membrane. Functionally, probably part of a binding-protein-dependent transport system y4tEFGH for an amino acid. Probably responsible for energy coupling to the transport system. This is Probable amino-acid ABC transporter ATP-binding protein y4tH from Sinorhizobium fredii (strain NBRC 101917 / NGR234).